The chain runs to 1411 residues: Alpha-latroinsectotoxin-Lt1a (1411 aa).

Positions 1–35 (ACSSPEVSIFHFFVYAGSFVKNFKKMKGSSAISKR) are excised as a propeptide. The segment at 245-264 (ALYALFYGTETFISIMFYLV) is helix H8 is the probable transmembrane region of the tetrameric pore inserted in the target cell membrane. 20 ANK repeats span residues 462-495 (DIHR…NVSE), 499-528 (LGRG…NLLE), 533-562 (NGYT…DVNV), 567-597 (DLFT…DLNA), 601-630 (SGFT…VINI), 634-663 (VGLT…YLND), 667-697 (NGMT…NINA), 702-732 (KKWT…NIRL), 736-765 (GGIN…DVTR), 769-798 (KGFS…NVND), 802-831 (SGVT…DIKA), 835-864 (NSQM…SLMN), 869-898 (RNEY…NVNE), 902-931 (NGNT…NFRL), 935-965 (ERKT…NLQA), 968-999 (RGKT…LNES), 1000-1029 (ECNP…NPAE), 1080-1109 (QENT…DPNQ), 1112-1142 (DGDP…DINT), and 1146-1175 (ERFT…DVNA). A propeptide spanning residues 1196 to 1411 (QSSRFLRSGH…KVNSNVSQIK (216 aa)) is cleaved from the precursor. A compositionally biased stretch (polar residues) spans 1230 to 1249 (DKLTQQISSKGTRSDSNSTE). Residues 1230–1254 (DKLTQQISSKGTRSDSNSTEGKMHS) form a disordered region. One copy of the ANK 21 repeat lies at 1331–1361 (NVHSKIYKAIMSGRRSVISEMLCSFAEEYSK).

The protein belongs to the cationic peptide 01 (latrotoxin) family. 02 (alpha-latroinsectotoxin) subfamily. Homotetramer in membranes. In terms of tissue distribution, expressed by the venom gland.

The protein resides in the secreted. It is found in the target cell membrane. Functionally, insecticidal presynaptic neurotoxin that induces massive neurotransmitter release at insect (but not vertebrate) neuromuscular junctions. Native toxin forms cation-permeable pores (with high permeability to calcium) in lipid membranes locust muscle membrane and artificial lipid bilayers. May bind to insect neurexin-1 homolog, insect adhesion G protein-coupled receptor L1 homolog, and insect receptor-type tyrosine-protein phosphatase S homolog, and induces neurotransmitter exocytosis both by forming tetrameric pores in membranes and signaling via G protein-coupled receptor. Oligomerization is a process independent of divalent cations. The toxin forms channels with 0.55-0.58 nm entrance diameter and a relatively small conductance in planar phospholipid membranes. The polypeptide is Alpha-latroinsectotoxin-Lt1a (Latrodectus tredecimguttatus (Mediterranean black widow spider)).